A 762-amino-acid polypeptide reads, in one-letter code: Pyrophosphate-energized vacuolar membrane proton pump (762 aa).

The Intravacuolar segment spans residues 1–6; the sequence is MAILGE. Residues 7 to 33 traverse the membrane as a helical segment; the sequence is LGTEILIPVCGVIGIVFAVAQWFIVSK. Over 34–81 the chain is Cytoplasmic; the sequence is VKVTPGAASAAAGAKNGYGDYLIEEEEGLNDHNVVVKCAEIQTAISEG. The helical transmembrane segment at 82–111 threads the bilayer; sequence ATSFLFTMYQYVGMFMVVFAAIIFLFLGSI. Residues 112–131 lie on the Intravacuolar side of the membrane; sequence EGFSTKGQPCTYSKGTCKPA. A disulfide bridge connects residues cysteine 121 and cysteine 128. The helical transmembrane segment at 132-159 threads the bilayer; sequence LYTALFSTASFLLGAITSLVSGFLGMKI. The Cytoplasmic portion of the chain corresponds to 160-182; sequence ATYANARTTLEARKGVGKAFITA. Residues 183–212 traverse the membrane as a helical segment; it reads FRSGAVMGFLLSSSGLVVLYITINVFKMYY. The Intravacuolar portion of the chain corresponds to 213–215; the sequence is GDD. The helical transmembrane segment at 216 to 244 threads the bilayer; that stretch reads WEGLFESITGYGLGGSSMALFGRVGGGIY. At 245–282 the chain is on the cytoplasmic side; that stretch reads TKAADVGADLVGKVERNIPEDDPRNPAVIADNVGDNVG. Lysine 246 provides a ligand contact to substrate. 3 residues coordinate Mg(2+): aspartate 249, aspartate 253, and aspartate 279. A helical transmembrane segment spans residues 283–308; it reads DIAGMGSDLFGSYAESSCAALVVASI. At 309 to 316 the chain is on the intravacuolar side; it reads SSFGINHD. A helical membrane pass occupies residues 317–342; it reads FTAMCYPLLVSSVGIIVCLLTTLFAT. At 343 to 350 the chain is on the cytoplasmic side; the sequence is DFFEIKAA. A helical transmembrane segment spans residues 351-378; it reads NEIEPALKKQLIISTALMTVGVAVISWL. Topologically, residues 379-397 are intravacuolar; sequence ALPAKFTIFNFGAQKEVSN. A helical membrane pass occupies residues 398–421; sequence WGLFFCVAVGLWAGLIIGFVTEYY. Residues 422–443 are Cytoplasmic-facing; sequence TSNAYSPVQDVADSCRTGAATN. The chain crosses the membrane as a helical span at residues 444–468; that stretch reads VIFGLALGYKSVIIPIFAIAVSIYV. Topologically, residues 469 to 474 are intravacuolar; sequence SFSIAA. A helical membrane pass occupies residues 475–501; it reads MYGIAMAALGMLSTMATGLAIDAYGPI. The Cytoplasmic segment spans residues 502 to 530; that stretch reads SDNAGGIAEMAGMSHRIRERTDALDAAGN. 2 residues coordinate Mg(2+): aspartate 503 and asparagine 530. A helical membrane pass occupies residues 531–559; that stretch reads TTAAIGKGFAIGSAALVSLALFGAFVSRA. Over 560 to 569 the chain is Intravacuolar; sequence GVKVVDVLSP. Residues 570–598 form a helical membrane-spanning segment; that stretch reads KVFIGLIVGAMLPYWFSAMTMKSVGSAAL. The Cytoplasmic segment spans residues 599-627; the sequence is KMVEEVRRQFNTIPGLMEGTAKPDYATCV. A helical transmembrane segment spans residues 628-656; it reads KISTDASIKEMIPPGALVMLTPLIVGTLF. A topological domain (intravacuolar) is located at residue glycine 657. The helical transmembrane segment at 658 to 685 threads the bilayer; that stretch reads VETLSGVLAGALVSGVQIAISASNTGGA. The Cytoplasmic portion of the chain corresponds to 686–728; that stretch reads WDNAKKYIEAGNSEHARSLGPKGSDCHKAAVIGDTIGDPLKDT. Aspartate 687 and aspartate 723 together coordinate Mg(2+). Lysine 726 provides a ligand contact to substrate. Residues 729–754 form a helical membrane-spanning segment; it reads SGPSLNILIKLMAVESLVFAPFFATY. At 755 to 762 the chain is on the intravacuolar side; it reads GGLLFKYI.

The protein belongs to the H(+)-translocating pyrophosphatase (TC 3.A.10) family. K(+)-stimulated subfamily. In terms of assembly, monomer.

The protein resides in the vacuole membrane. It catalyses the reaction diphosphate + H2O + H(+)(in) = 2 phosphate + 2 H(+)(out). Functionally, contributes to the transtonoplast (from cytosol to vacuole lumen) H(+)-electrochemical potential difference. It establishes a proton gradient of similar and often greater magnitude than the H(+)-ATPase on the same membrane. In Hordeum vulgare (Barley), this protein is Pyrophosphate-energized vacuolar membrane proton pump.